Consider the following 115-residue polypeptide: MNLLMALFIDASLSLILISIAFWLPQLNIYTEKAGPYECGFDPLSSARLPFSMKFFLVAITFLLFDLEIALLLPLPWAIQIPKLSAMMVTSFILISVLALGLMYEWMNKGLEWTE.

3 helical membrane passes run 3–23 (LLMALFIDASLSLILISIAFW), 55–75 (FFLVAITFLLFDLEIALLLPL), and 84–104 (LSAMMVTSFILISVLALGLMY).

It belongs to the complex I subunit 3 family. In terms of assembly, core subunit of respiratory chain NADH dehydrogenase (Complex I) which is composed of 45 different subunits. Interacts with TMEM186. Interacts with TMEM242.

Its subcellular location is the mitochondrion inner membrane. The catalysed reaction is a ubiquinone + NADH + 5 H(+)(in) = a ubiquinol + NAD(+) + 4 H(+)(out). Functionally, core subunit of the mitochondrial membrane respiratory chain NADH dehydrogenase (Complex I) which catalyzes electron transfer from NADH through the respiratory chain, using ubiquinone as an electron acceptor. Essential for the catalytic activity of complex I. This Sigmodon ochrognathus (Yellow-nosed cotton rat) protein is NADH-ubiquinone oxidoreductase chain 3.